A 154-amino-acid chain; its full sequence is MTHYEGDLRPAGARFVIVCSRWNARITDALVAGACRTLVDNGVSDDAVDVVRVPGAWEIPIVANLLAQVGQHAAIIALGCVVRGDTRHYEHVADLCAEGMMSVQMQTGVPVLNGVLAVECIKDAEMRAGGSHGNKGAETALAALEMVSLLEKLP.

5-amino-6-(D-ribitylamino)uracil-binding positions include tryptophan 22, 56 to 58, and 80 to 82; these read AWE and CVV. 85–86 contributes to the (2S)-2-hydroxy-3-oxobutyl phosphate binding site; it reads DT. Catalysis depends on histidine 88, which acts as the Proton donor. Residue asparagine 113 participates in 5-amino-6-(D-ribitylamino)uracil binding. Arginine 127 contacts (2S)-2-hydroxy-3-oxobutyl phosphate.

Belongs to the DMRL synthase family. As to quaternary structure, forms an icosahedral capsid composed of 60 subunits, arranged as a dodecamer of pentamers.

The enzyme catalyses (2S)-2-hydroxy-3-oxobutyl phosphate + 5-amino-6-(D-ribitylamino)uracil = 6,7-dimethyl-8-(1-D-ribityl)lumazine + phosphate + 2 H2O + H(+). It functions in the pathway cofactor biosynthesis; riboflavin biosynthesis; riboflavin from 2-hydroxy-3-oxobutyl phosphate and 5-amino-6-(D-ribitylamino)uracil: step 1/2. Functionally, catalyzes the formation of 6,7-dimethyl-8-ribityllumazine by condensation of 5-amino-6-(D-ribitylamino)uracil with 3,4-dihydroxy-2-butanone 4-phosphate. This is the penultimate step in the biosynthesis of riboflavin. This Xylella fastidiosa (strain 9a5c) protein is 6,7-dimethyl-8-ribityllumazine synthase.